A 509-amino-acid chain; its full sequence is Nucleoprotein (509 aa).

Positions 1–404 (MSSVLKAYER…ANTLAKLTTA (404 aa)) are ncore. RNA contacts are provided by Lys-180, Arg-195, Tyr-260, Tyr-350, and Arg-354. Residues 405–509 (NRGADTRGGV…LNAALGDLDI (105 aa)) are ntail. The disordered stretch occupies residues 452–477 (GTHDDEMPPLEEEEEDDTSAGPRTGP). Positions 458-469 (MPPLEEEEEDDT) are enriched in acidic residues.

This sequence belongs to the paramyxoviruses nucleocapsid family. In terms of assembly, homomultimer; forms the nucleocapsid. Binds to the viral genomic RNA. N0 interacts with the phosphoprotein (via N-terminus); this interaction allows P to chaperon N0 to avoid N polymerization before encapsidation. Interacts as N-RNA template with the phosphoprotein (via C-terminus); this interaction positions the polymerase on the template.

Its subcellular location is the virion. It is found in the host cytoplasm. Functionally, forms the helical nucleocapsid (NC), protecting the genome from nucleases. The encapsidated genomic RNA serves as template for transcription and replication; encapsidation by N is coupled to RNA synthesis. Forms the encapsidation complex with the phosphoprotein protein P. Before encapsidation, the newly synthesized free N protein, so-called N0, is chaperoned by P. This is Nucleoprotein (NP) from Canis lupus familiaris (Dog).